Consider the following 242-residue polypeptide: ATP synthase subunit a (242 aa).

The next 6 membrane-spanning stretches (helical) occupy residues Ser29 to Tyr49, Phe84 to Thr104, Ile114 to Val134, Phe140 to Ile160, Met181 to Leu201, and Phe203 to Gln223.

Belongs to the ATPase A chain family. In terms of assembly, F-type ATPases have 2 components, CF(1) - the catalytic core - and CF(0) - the membrane proton channel. CF(1) has five subunits: alpha(3), beta(3), gamma(1), delta(1), epsilon(1). CF(0) has three main subunits: a(1), b(2) and c(9-12). The alpha and beta chains form an alternating ring which encloses part of the gamma chain. CF(1) is attached to CF(0) by a central stalk formed by the gamma and epsilon chains, while a peripheral stalk is formed by the delta and b chains.

It is found in the cell membrane. Key component of the proton channel; it plays a direct role in the translocation of protons across the membrane. The protein is ATP synthase subunit a of Rickettsia africae (strain ESF-5).